The sequence spans 189 residues: Probable nicotinate-nucleotide adenylyltransferase (189 aa).

It belongs to the NadD family.

It carries out the reaction nicotinate beta-D-ribonucleotide + ATP + H(+) = deamido-NAD(+) + diphosphate. It functions in the pathway cofactor biosynthesis; NAD(+) biosynthesis; deamido-NAD(+) from nicotinate D-ribonucleotide: step 1/1. Catalyzes the reversible adenylation of nicotinate mononucleotide (NaMN) to nicotinic acid adenine dinucleotide (NaAD). In Staphylococcus aureus (strain MRSA252), this protein is Probable nicotinate-nucleotide adenylyltransferase.